The chain runs to 375 residues: Alpha-2,8-sialyltransferase 8B (375 aa).

At Met-1 to Arg-6 the chain is on the cytoplasmic side. A helical; Signal-anchor for type II membrane protein membrane pass occupies residues Ser-7–Ala-23. The Lumenal portion of the chain corresponds to Asp-24–Thr-375. Residues Asn-60, Asn-72, Asn-89, and Asn-134 are each glycosylated (N-linked (GlcNAc...) asparagine). 2 cysteine pairs are disulfide-bonded: Cys-157-Cys-307 and Cys-171-Cys-371. CMP-N-acetyl-beta-neuraminate-binding residues include Asn-162 and Asn-185. N-linked (GlcNAc...) asparagine glycosylation is found at Asn-219 and Asn-234. 6 residues coordinate CMP-N-acetyl-beta-neuraminate: Thr-294, Thr-295, Gly-296, Trp-316, Tyr-329, and His-330. The active-site Proton donor/acceptor is the His-346.

Belongs to the glycosyltransferase 29 family. Post-translationally, autopolysialylated. Autopolysialylation is not a prerequisite for the polysialylation acitity, but enhances the polysialylation acitity. Highly expressed in fetal brain, kidney and heart and to a much lesser extent in adult heart and thymus.

Its subcellular location is the golgi apparatus membrane. The protein localises to the secreted. It localises to the cell membrane. The catalysed reaction is [N-acetyl-alpha-D-neuraminosyl-(2-&gt;8)](n) + CMP-N-acetyl-beta-neuraminate = [N-acetyl-alpha-D-neuraminosyl-(2-&gt;8)](n+1) + CMP + H(+). The protein operates within protein modification; protein glycosylation. Functionally, catalyzes the transfer of a sialic acid from a CMP-linked sialic acid donor onto a terminal alpha-2,3-, alpha-2,6-, or alpha-2,8-linked sialic acid of an N-linked glycan acceptor through alpha-2,8-linkages. Therefore, participates in polysialic acid synthesis on various sialylated N-acetyllactosaminyl oligosaccharides (alpha-2,3-, alpha-2,6-, or alpha-2,8-linked sialic acid), including NCAM1, NCAM1 N-glycans, FETUB N-glycans, and to a lesser extent sialylparagloboside (SPG) and AHSG, which does not require the initial addition of an alpha 2,8-sialic acid. However, does not exhibit sialic acid-polymerase activity. Catalyzes polysialic acid synthesis in the hippocampal on NCAM1 and supports neurite outgrowth. ST8SIA2-mediated polysialylation influences on oligodendrocyte differentiation and may promote the integrity of myelin and axons. The protein is Alpha-2,8-sialyltransferase 8B of Homo sapiens (Human).